Consider the following 203-residue polypeptide: Small ribosomal subunit protein uS4 (203 aa).

Residues 93-154 (RRLDNVVYRC…KSRNLDAVAD (62 aa)) enclose the S4 RNA-binding domain.

The protein belongs to the universal ribosomal protein uS4 family. Part of the 30S ribosomal subunit. Contacts protein S5. The interaction surface between S4 and S5 is involved in control of translational fidelity.

Functionally, one of the primary rRNA binding proteins, it binds directly to 16S rRNA where it nucleates assembly of the body of the 30S subunit. In terms of biological role, with S5 and S12 plays an important role in translational accuracy. The sequence is that of Small ribosomal subunit protein uS4 from Chlorobaculum tepidum (strain ATCC 49652 / DSM 12025 / NBRC 103806 / TLS) (Chlorobium tepidum).